Here is a 365-residue protein sequence, read N- to C-terminus: GTPase Obg (365 aa).

The 177-residue stretch at Met-1 to Ile-177 folds into the Obg domain. Residues Gln-64–Leu-85 form a disordered region. The OBG-type G domain occupies Ala-178–Glu-348. GTP contacts are provided by residues Gly-184–Ser-191, Phe-209–Lys-213, Asp-231–Gly-234, Asn-300–Asp-303, and Ser-329–Leu-331. Mg(2+) contacts are provided by Ser-191 and Thr-211.

This sequence belongs to the TRAFAC class OBG-HflX-like GTPase superfamily. OBG GTPase family. Monomer. Mg(2+) serves as cofactor.

The protein resides in the cytoplasm. In terms of biological role, an essential GTPase which binds GTP, GDP and possibly (p)ppGpp with moderate affinity, with high nucleotide exchange rates and a fairly low GTP hydrolysis rate. Plays a role in control of the cell cycle, stress response, ribosome biogenesis and in those bacteria that undergo differentiation, in morphogenesis control. This is GTPase Obg from Methylacidiphilum infernorum (isolate V4) (Methylokorus infernorum (strain V4)).